Reading from the N-terminus, the 446-residue chain is Exodeoxyribonuclease 7 large subunit (446 aa).

The protein belongs to the XseA family. Heterooligomer composed of large and small subunits.

The protein resides in the cytoplasm. It carries out the reaction Exonucleolytic cleavage in either 5'- to 3'- or 3'- to 5'-direction to yield nucleoside 5'-phosphates.. Functionally, bidirectionally degrades single-stranded DNA into large acid-insoluble oligonucleotides, which are then degraded further into small acid-soluble oligonucleotides. In Xanthomonas campestris pv. campestris (strain 8004), this protein is Exodeoxyribonuclease 7 large subunit.